Here is a 146-residue protein sequence, read N- to C-terminus: Large ribosomal subunit protein bL21 (146 aa).

Residues 103–146 are disordered; the sequence is DGKSPTIGPRPKKEKAVEPVEGASDDKPRRAAKKTAAKTAEDAD. The segment covering 116-131 has biased composition (basic and acidic residues); it reads EKAVEPVEGASDDKPR.

This sequence belongs to the bacterial ribosomal protein bL21 family. Part of the 50S ribosomal subunit. Contacts protein L20.

Its function is as follows. This protein binds to 23S rRNA in the presence of protein L20. The protein is Large ribosomal subunit protein bL21 of Nitrobacter winogradskyi (strain ATCC 25391 / DSM 10237 / CIP 104748 / NCIMB 11846 / Nb-255).